We begin with the raw amino-acid sequence, 428 residues long: Histidinol dehydrogenase (428 aa).

Substrate contacts are provided by Ser-234, Gln-256, and His-259. The Zn(2+) site is built by Gln-256 and His-259. Catalysis depends on proton acceptor residues Glu-323 and His-324. Substrate contacts are provided by His-324, Asp-357, Glu-411, and His-416. Residue Asp-357 participates in Zn(2+) binding. A Zn(2+)-binding site is contributed by His-416.

It belongs to the histidinol dehydrogenase family. It depends on Zn(2+) as a cofactor.

The enzyme catalyses L-histidinol + 2 NAD(+) + H2O = L-histidine + 2 NADH + 3 H(+). It functions in the pathway amino-acid biosynthesis; L-histidine biosynthesis; L-histidine from 5-phospho-alpha-D-ribose 1-diphosphate: step 9/9. Functionally, catalyzes the sequential NAD-dependent oxidations of L-histidinol to L-histidinaldehyde and then to L-histidine. The chain is Histidinol dehydrogenase from Campylobacter jejuni subsp. jejuni serotype O:2 (strain ATCC 700819 / NCTC 11168).